The chain runs to 175 residues: Large ribosomal subunit protein uL10 (175 aa).

Belongs to the universal ribosomal protein uL10 family. In terms of assembly, part of the ribosomal stalk of the 50S ribosomal subunit. The N-terminus interacts with L11 and the large rRNA to form the base of the stalk. The C-terminus forms an elongated spine to which L12 dimers bind in a sequential fashion forming a multimeric L10(L12)X complex.

Its function is as follows. Forms part of the ribosomal stalk, playing a central role in the interaction of the ribosome with GTP-bound translation factors. This chain is Large ribosomal subunit protein uL10, found in Synechococcus elongatus (strain ATCC 33912 / PCC 7942 / FACHB-805) (Anacystis nidulans R2).